A 206-amino-acid chain; its full sequence is ATP phosphoribosyltransferase (206 aa).

It belongs to the ATP phosphoribosyltransferase family. Short subfamily. As to quaternary structure, heteromultimer composed of HisG and HisZ subunits.

It localises to the cytoplasm. The catalysed reaction is 1-(5-phospho-beta-D-ribosyl)-ATP + diphosphate = 5-phospho-alpha-D-ribose 1-diphosphate + ATP. It participates in amino-acid biosynthesis; L-histidine biosynthesis; L-histidine from 5-phospho-alpha-D-ribose 1-diphosphate: step 1/9. In terms of biological role, catalyzes the condensation of ATP and 5-phosphoribose 1-diphosphate to form N'-(5'-phosphoribosyl)-ATP (PR-ATP). Has a crucial role in the pathway because the rate of histidine biosynthesis seems to be controlled primarily by regulation of HisG enzymatic activity. This is ATP phosphoribosyltransferase from Sulfurovum sp. (strain NBC37-1).